A 194-amino-acid chain; its full sequence is Holliday junction branch migration complex subunit RuvA (194 aa).

Positions 1 to 64 (MIGRLRGILA…EDSVSLYGFL (64 aa)) are domain I. The tract at residues 65-140 (REGERRLFRD…RAADFSSGAP (76 aa)) is domain II. Residues 140–144 (PITGQ) are flexible linker. The interval 145 to 194 (LGPDAVSEATVALQQLGYKPAEAARMARDAGAEGDEVATVIRKALQAALR) is domain III.

This sequence belongs to the RuvA family. As to quaternary structure, homotetramer. Forms an RuvA(8)-RuvB(12)-Holliday junction (HJ) complex. HJ DNA is sandwiched between 2 RuvA tetramers; dsDNA enters through RuvA and exits via RuvB. An RuvB hexamer assembles on each DNA strand where it exits the tetramer. Each RuvB hexamer is contacted by two RuvA subunits (via domain III) on 2 adjacent RuvB subunits; this complex drives branch migration. In the full resolvosome a probable DNA-RuvA(4)-RuvB(12)-RuvC(2) complex forms which resolves the HJ.

The protein resides in the cytoplasm. Functionally, the RuvA-RuvB-RuvC complex processes Holliday junction (HJ) DNA during genetic recombination and DNA repair, while the RuvA-RuvB complex plays an important role in the rescue of blocked DNA replication forks via replication fork reversal (RFR). RuvA specifically binds to HJ cruciform DNA, conferring on it an open structure. The RuvB hexamer acts as an ATP-dependent pump, pulling dsDNA into and through the RuvAB complex. HJ branch migration allows RuvC to scan DNA until it finds its consensus sequence, where it cleaves and resolves the cruciform DNA. In Xanthomonas axonopodis pv. citri (strain 306), this protein is Holliday junction branch migration complex subunit RuvA.